The chain runs to 247 residues: Large ribosomal subunit protein uL24m (247 aa).

Positions Phe84 to Glu117 constitute a KOW domain.

It belongs to the universal ribosomal protein uL24 family. Component of the mitochondrial ribosome large subunit (39S) which comprises a 16S rRNA and about 50 distinct proteins.

It localises to the mitochondrion. This is Large ribosomal subunit protein uL24m (mRpL24) from Drosophila melanogaster (Fruit fly).